Here is a 629-residue protein sequence, read N- to C-terminus: Polygalacturonase non-catalytic subunit AroGP2 (629 aa).

An N-terminal signal peptide occupies residues 1 to 27; that stretch reads MHNKILVSSYILLVLLFSLSSFNIVVA. A propeptide spanning residues 28-109 is cleaved from the precursor; that stretch reads KDGDESGNPF…MCAPDLLPSL (82 aa). N-linked (GlcNAc...) asparagine glycosylation is found at asparagine 125, asparagine 143, asparagine 255, asparagine 277, asparagine 333, asparagine 368, and asparagine 386. Positions 267-293 are enriched in polar residues; sequence YGQNANGENQNFTSYSTNGNNPQNNFK. A disordered region spans residues 267–305; sequence YGQNANGENQNFTSYSTNGNNPQNNFKNYGVGGNGPSET. Residues 414 to 628 enclose the BURP domain; that stretch reads FFREKMLKSG…FENDMTWATA (215 aa).

As to quaternary structure, interacts with polygalacturonase to form heterodimers.

It is found in the secreted. Its subcellular location is the extracellular space. The protein resides in the apoplast. It localises to the cell wall. Non-catalytic subunit of polygalacturonase. The protein is Polygalacturonase non-catalytic subunit AroGP2 (GP2) of Solanum lycopersicum (Tomato).